The primary structure comprises 979 residues: MGDNPFQPKSNSKMAELFMECEEEELEPWQKKVKEVEDDDDDEPIFVGEISSSKPAISNILNRVNPSSYSRGLKNGALSRGITAAFKPTSQHYTNPTSNPVPASPINFHPESRSSDSSVIVQPFSKPGYITNSSRVVSNKSSELLFDLTQDTGLSHYQGGPTLSMAGMSESSFLSKRPSTSEVNNVNPKKPKPSESVSGANSSAVLPSVKSPSVTSSQAMLAKGTNTSSNQSKNGTPFPRACPKCNIHFNLLDPLKNHMKYCCPDMINNFLGLAKTEFSSTVNKNTTIDSEKGKLIMLVNDFYYGKHEGDVQEEQKTHTTFKCFSCLKILKNNIRFMNHMKHHLELEKQSSESWENHTTCQHCYRQFPTPFQLQCHIESTHTPHEFSTICKICELSFETEHVLLQHMKDNHKPGEMPYVCQVCNYRSSSFSDVETHFRTSHENTKNLLCPFCLKVIKIATPYMHHYMKHQKKGIHRCTKCRLQFLTCKEKMDHKTQHHRTFIKPKQLEGLPPGTKVTIRASVGPLQSGASPTPSISASASTLQLSPPRTKNITAKNPAKSNTSKPNTVKSNASKPNTSKPNGSKSKYKPKISNMQKKQSTLASSNKKSKVNTALRNLRYRRGIHKCIECCSEIKDFANHFPTYVHCSFCRYNTSCSKAYVNHMMSFHSNRPSKRFCIFKKHSENLRGITLVCLNCDFLSDVSGLDNMATHLSQHKTHTCQVVMQKVSVCIPTSEHLSELKKEAPAKEQEPVSKEIARPNMAERETETSNSESKQDKAASSKEKNGCNANSFEGSSTTKSEESITVSDKENETCLADQETGSKNIVSCDSNIGADKVEKKKQIQHVCQEMELKMCQSSENIILSDQIKDHNSSEARFSSKNIKDLRLASDNVSIDQFLRKRHEPESVSSDVSEQGSIHLEPLTPSEVLEYEATEILQKGSGDPSAKTDEVVSDQTDDIPGGNNPSTTEATVDLEDEKERS.

Glycyl lysine isopeptide (Lys-Gly) (interchain with G-Cter in SUMO2) cross-links involve residues Lys-32, Lys-34, Lys-74, and Lys-87. Polar residues predominate over residues 89-101 (TSQHYTNPTSNPV). A disordered region spans residues 89 to 119 (TSQHYTNPTSNPVPASPINFHPESRSSDSSV). The residue at position 104 (Ser-104) is a Phosphoserine. Residues Lys-126 and Lys-140 each participate in a glycyl lysine isopeptide (Lys-Gly) (interchain with G-Cter in SUMO2) cross-link. The tract at residues 157–236 (YQGGPTLSMA…TSSNQSKNGT (80 aa)) is disordered. Residues 169-187 (SESSFLSKRPSTSEVNNVN) show a composition bias toward polar residues. Glycyl lysine isopeptide (Lys-Gly) (interchain with G-Cter in SUMO2) cross-links involve residues Lys-189, Lys-210, Lys-223, Lys-233, Lys-275, Lys-284, and Lys-292. The span at 195 to 235 (ESVSGANSSAVLPSVKSPSVTSSQAMLAKGTNTSSNQSKNG) shows a compositional bias: polar residues. 2 consecutive C2H2-type zinc fingers follow at residues 321–343 (FKCF…MKHH) and 358–381 (TTCQ…ESTH). The segment at 388–412 (TICKICELSFETEHVLLQHMKDNHK) adopts a C2H2-type 3; degenerate zinc-finger fold. C2H2-type zinc fingers lie at residues 418–441 (YVCQ…RTSH) and 449–469 (CPFC…YMKH). 3 disordered regions span residues 523–608 (GPLQ…NKKS), 739–809 (LKKE…SDKE), and 896–979 (FLRK…KERS). A compositionally biased stretch (low complexity) spans 527–541 (SGASPTPSISASAST). Composition is skewed to polar residues over residues 542-584 (LQLS…NGSK) and 592-608 (SNMQ…NKKS). Residue Ser-545 is modified to Phosphoserine. Residue Lys-550 forms a Glycyl lysine isopeptide (Lys-Gly) (interchain with G-Cter in SUMO2) linkage. Over residues 739-784 (LKKEAPAKEQEPVSKEIARPNMAERETETSNSESKQDKAASSKEKN) the composition is skewed to basic and acidic residues. Residue Lys-740 forms a Glycyl lysine isopeptide (Lys-Gly) (interchain with G-Cter in SUMO2) linkage. Positions 786 to 797 (CNANSFEGSSTT) are enriched in polar residues. A compositionally biased stretch (basic and acidic residues) spans 798-809 (KSEESITVSDKE). Residues 905–914 (SVSSDVSEQG) are compositionally biased toward polar residues. Phosphoserine occurs at positions 908 and 911. A compositionally biased stretch (acidic residues) spans 970-979 (VDLEDEKERS). Residue Lys-976 forms a Glycyl lysine isopeptide (Lys-Gly) (interchain with G-Cter in SUMO2) linkage.

Its subcellular location is the nucleus. May function as a transcription factor. In Homo sapiens (Human), this protein is Zinc finger protein 280D (ZNF280D).